The chain runs to 406 residues: Phosphopentomutase (406 aa).

6 residues coordinate Mn(2+): D10, D305, H310, D346, H347, and H358.

It belongs to the phosphopentomutase family. The cofactor is Mn(2+).

Its subcellular location is the cytoplasm. The enzyme catalyses 2-deoxy-alpha-D-ribose 1-phosphate = 2-deoxy-D-ribose 5-phosphate. It catalyses the reaction alpha-D-ribose 1-phosphate = D-ribose 5-phosphate. It functions in the pathway carbohydrate degradation; 2-deoxy-D-ribose 1-phosphate degradation; D-glyceraldehyde 3-phosphate and acetaldehyde from 2-deoxy-alpha-D-ribose 1-phosphate: step 1/2. Its function is as follows. Isomerase that catalyzes the conversion of deoxy-ribose 1-phosphate (dRib-1-P) and ribose 1-phosphate (Rib-1-P) to deoxy-ribose 5-phosphate (dRib-5-P) and ribose 5-phosphate (Rib-5-P), respectively. The protein is Phosphopentomutase of Vibrio parahaemolyticus serotype O3:K6 (strain RIMD 2210633).